A 691-amino-acid chain; its full sequence is NADPH--cytochrome P450 reductase (691 aa).

At 2-7 (PFGIDN) the chain is on the lumenal side. Residues 8 to 24 (TDFTVLAGLVLAVLLYV) form a helical membrane-spanning segment. Residues 25–691 (KRNSIKELLM…TSGRYQEDVW (667 aa)) lie on the Cytoplasmic side of the membrane. The 144-residue stretch at 61-204 (YLVLYASQTG…DYMAWKDSIL (144 aa)) folds into the Flavodoxin-like domain. Residues 67–72 (SQTGTA), Lys-78, 116–119 (STYG), 152–161 (LGNSTYEFFN), and Asp-187 each bind FMN. The FAD-binding FR-type domain maps to 266 to 529 (SQPYIAPIVK…HVRRSNFRLP (264 aa)). Residue Arg-285 coordinates NADP(+). Residues 439 to 442 (RYYS), 457 to 459 (TSI), and 476 to 479 (GVTT) contribute to the FAD site. NADP(+) contacts are provided by residues Thr-543, 610–611 (SR), 617–621 (KVYVQ), and Asp-646. Lys-666 is covalently cross-linked (Glycyl lysine isopeptide (Lys-Gly) (interchain with G-Cter in ubiquitin)). Trp-691 is an FAD binding site.

Belongs to the NADPH--cytochrome P450 reductase family. The protein in the N-terminal section; belongs to the flavodoxin family. This sequence in the C-terminal section; belongs to the flavoprotein pyridine nucleotide cytochrome reductase family. Interacts with PCL1. FAD is required as a cofactor. FMN serves as cofactor. Phosphorylated by the cyclin-CDK PCL1-PHO85.

The protein resides in the endoplasmic reticulum membrane. It localises to the mitochondrion outer membrane. It is found in the cell membrane. It carries out the reaction 2 oxidized [cytochrome P450] + NADPH = 2 reduced [cytochrome P450] + NADP(+) + H(+). Its function is as follows. This enzyme is required for electron transfer from NADP to cytochrome P450 in microsomes. It can also provide electron transfer to heme oxygenase and cytochrome B5. Involved in ergosterol biosynthesis. Has NADPH-dependent ferrireductase activity on the plasma membrane. This Saccharomyces cerevisiae (strain ATCC 204508 / S288c) (Baker's yeast) protein is NADPH--cytochrome P450 reductase.